A 275-amino-acid polypeptide reads, in one-letter code: MTTEQARGQQGPNLAIGRQKPPAGVVTPKSDAEEPPLTRKRSKKERGLRGSRKRTGSSGEQTGPEAPGSSNNPPSTGEGPAGAPPASPGPASSRQSHRHRPDSLHDAAQRTYGPLLNRVFGKDRELGPEELDELQAAFEEFDTDRDGYISHRELGDCMRTLGYMPTEMELLEVSQHIKMRMGGRVDFEEFVELIGPKLREETAHMLGVRELRIAFREFDRDRDGRITVAELREAVPALLGEPLAGPELDEMLREVDLNGDGTVDFDEFVMMLSRH.

The span at 1–12 (MTTEQARGQQGP) shows a compositional bias: polar residues. The tract at residues 1–112 (MTTEQARGQQ…SLHDAAQRTY (112 aa)) is disordered. The segment covering 38–55 (TRKRSKKERGLRGSRKRT) has biased composition (basic residues). Phosphoserine is present on Ser42. EF-hand domains lie at 129-164 (EELD…LGYM), 183-200 (GRVD…KLRE), 206-241 (LGVR…LLGE), and 243-275 (LAGP…LSRH). The Ca(2+) site is built by Asp142, Asp144, Asp146, Tyr148, and Glu153. Residues Asp219, Asp221, Asp223, Arg225, Glu230, Asp256, Asn258, Asp260, Thr262, and Glu267 each coordinate Ca(2+).

As to quaternary structure, interacts with CACNA1F and CACNA1D (via IQ domain) in a calcium independent manner. Interacts (via N-terminus) with UNC119. Post-translationally, phosphorylated. Phosphorylation levels change with the light conditions and regulate the activity. As to expression, expressed in retina and in the inner hair cells (IHC) of the cochlea.

It localises to the cytoplasm. The protein resides in the presynapse. Involved in normal synaptic function through regulation of Ca(2+) influx and neurotransmitter release in photoreceptor synaptic terminals and in auditory transmission. Modulator of CACNA1D and CACNA1F, suppressing the calcium-dependent inactivation and shifting the activation range to more hyperpolarized voltages. The sequence is that of Calcium-binding protein 4 (CABP4) from Homo sapiens (Human).